We begin with the raw amino-acid sequence, 83 residues long: Cell division topological specificity factor (83 aa).

Belongs to the MinE family.

Prevents the cell division inhibition by proteins MinC and MinD at internal division sites while permitting inhibition at polar sites. This ensures cell division at the proper site by restricting the formation of a division septum at the midpoint of the long axis of the cell. The protein is Cell division topological specificity factor of Acidithiobacillus ferrooxidans (strain ATCC 23270 / DSM 14882 / CIP 104768 / NCIMB 8455) (Ferrobacillus ferrooxidans (strain ATCC 23270)).